A 363-amino-acid chain; its full sequence is Protein RecA (363 aa).

Position 78–85 (78–85 (GPESGGKT)) interacts with ATP.

It belongs to the RecA family.

The protein resides in the cytoplasm. Functionally, can catalyze the hydrolysis of ATP in the presence of single-stranded DNA, the ATP-dependent uptake of single-stranded DNA by duplex DNA, and the ATP-dependent hybridization of homologous single-stranded DNAs. It interacts with LexA causing its activation and leading to its autocatalytic cleavage. Probably involved in base excision repair. Following severe irradiation (7 kGy of gamma irradiation) genomic DNA is fragmented. DNA is progressively degraded for the first 1.5 hours after IR, in a step promoted by RecA and counterbalanced by DNA Pol I and Pol III, followed by massive DNA synthesis and genome reassembly in the next hour. Optimal priming of DNA synthesis requires both RecA and RadA, Pol III initiates DNA synthesis while both Pol I and Pol III are required for its continuation. In the absence of RecA the majority of the chromosome is still reconstituted, via either single-strand annealing or non-homologous end joining. This Deinococcus radiodurans (strain ATCC 13939 / DSM 20539 / JCM 16871 / CCUG 27074 / LMG 4051 / NBRC 15346 / NCIMB 9279 / VKM B-1422 / R1) protein is Protein RecA.